Consider the following 456-residue polypeptide: Exodeoxyribonuclease 7 large subunit (456 aa).

It belongs to the XseA family. As to quaternary structure, heterooligomer composed of large and small subunits.

It localises to the cytoplasm. The enzyme catalyses Exonucleolytic cleavage in either 5'- to 3'- or 3'- to 5'-direction to yield nucleoside 5'-phosphates.. Bidirectionally degrades single-stranded DNA into large acid-insoluble oligonucleotides, which are then degraded further into small acid-soluble oligonucleotides. The protein is Exodeoxyribonuclease 7 large subunit of Erwinia tasmaniensis (strain DSM 17950 / CFBP 7177 / CIP 109463 / NCPPB 4357 / Et1/99).